Reading from the N-terminus, the 339-residue chain is Anthranilate phosphoribosyltransferase (339 aa).

5-phospho-alpha-D-ribose 1-diphosphate is bound by residues Gly-79, 82 to 83 (GD), Ser-87, 89 to 92 (NIST), 107 to 115 (KHGNRAASS), and Ala-119. Residue Gly-79 coordinates anthranilate. Residue Ser-91 participates in Mg(2+) binding. Asn-110 provides a ligand contact to anthranilate. Arg-165 contacts anthranilate. 2 residues coordinate Mg(2+): Asp-224 and Glu-225.

The protein belongs to the anthranilate phosphoribosyltransferase family. As to quaternary structure, homodimer. The cofactor is Mg(2+).

It carries out the reaction N-(5-phospho-beta-D-ribosyl)anthranilate + diphosphate = 5-phospho-alpha-D-ribose 1-diphosphate + anthranilate. It participates in amino-acid biosynthesis; L-tryptophan biosynthesis; L-tryptophan from chorismate: step 2/5. Its function is as follows. Catalyzes the transfer of the phosphoribosyl group of 5-phosphorylribose-1-pyrophosphate (PRPP) to anthranilate to yield N-(5'-phosphoribosyl)-anthranilate (PRA). The polypeptide is Anthranilate phosphoribosyltransferase (Lactiplantibacillus plantarum (strain ATCC BAA-793 / NCIMB 8826 / WCFS1) (Lactobacillus plantarum)).